Here is a 176-residue protein sequence, read N- to C-terminus: Odorant-binding protein 2a (176 aa).

A signal peptide spans 1 to 19; it reads MKSLLLTILLLGLVAVLKA. Residues Asn-42 and Asn-124 are each glycosylated (N-linked (GlcNAc...) asparagine). Cys-79 and Cys-172 are joined by a disulfide.

Belongs to the calycin superfamily. Lipocalin family. In terms of tissue distribution, expressed in the liver (at protein level). Expressed in epididymis.

It localises to the secreted. In terms of biological role, involved in the regulation of systematic glucose homeostasis and insulin sensitivity. Involved in the regulation of liver lipid levels by positive regulation of hepatic lipogenesis and negative regulation of fatty acid beta-oxidation; via downstream transcriptional regulation of CPT1A and hepatic lipogenic program gene expression. May regulate hepatic lipogenesis and fatty acid beta-oxidation in an autocrine or paracrine manner. In Mus musculus (Mouse), this protein is Odorant-binding protein 2a (Obp2a).